The chain runs to 851 residues: Leucine--tRNA ligase (851 aa).

Positions 51–61 (PYPSGDLHMGH) match the 'HIGH' region motif. The short motif at 615 to 619 (KMSKS) is the 'KMSKS' region element. An ATP-binding site is contributed by Lys-618.

Belongs to the class-I aminoacyl-tRNA synthetase family.

It localises to the cytoplasm. The enzyme catalyses tRNA(Leu) + L-leucine + ATP = L-leucyl-tRNA(Leu) + AMP + diphosphate. The sequence is that of Leucine--tRNA ligase from Clavibacter michiganensis subsp. michiganensis (strain NCPPB 382).